The primary structure comprises 471 residues: MLLYLADVVIFSHAKVYMEKIEKKNNSLKKFHIKTYGCQMNVYDSEMIEKIVSGLGFTLSERAEDADLIILNTCNIREKAAEKLYSELGQIRLLQKKKQERILIVVAGCVAQAEGEEIMRRAENVDVVVGPQSIHSLPELIAKVNRQSGKAIKMEFDPIEKFDYLAEETRKRRVPQSSAFLSIQEGCDKFCAFCVVPYTRGAEYSRSTEEVYREALSLTTKGVKEITLLGQNVNGYHGTLDSGNKVLNLGQLISRLGKIPSLKRIRYTTSHPVDMHKELYDAHANESKLMPFVHLPVQSGSDKILKQMNRKYTTADYLKIINEFQNARSDIAFSSDFIVGFPGESDDDFQQTLALIEQVNYAQCYSFKYSPRPGTPGATYPQISEETKNTRLQKLQQLLKEKQLEFNKKMIGKTVTVLFDKKHPDKISGRTEYMQQVFSDDSNLLDKIVTMRVEDASTFTLKCTAEDIIST.

The MTTase N-terminal domain occupies 29-146 (KKFHIKTYGC…LPELIAKVNR (118 aa)). [4Fe-4S] cluster is bound by residues Cys-38, Cys-74, Cys-109, Cys-187, Cys-191, and Cys-194. Residues 173–405 (RVPQSSAFLS…QQLLKEKQLE (233 aa)) enclose the Radical SAM core domain. The TRAM domain maps to 408–467 (KKMIGKTVTVLFDKKHPDKISGRTEYMQQVFSDDSNLLDKIVTMRVEDASTFTLKCTAED).

It belongs to the methylthiotransferase family. MiaB subfamily. In terms of assembly, monomer. It depends on [4Fe-4S] cluster as a cofactor.

It localises to the cytoplasm. It carries out the reaction N(6)-dimethylallyladenosine(37) in tRNA + (sulfur carrier)-SH + AH2 + 2 S-adenosyl-L-methionine = 2-methylsulfanyl-N(6)-dimethylallyladenosine(37) in tRNA + (sulfur carrier)-H + 5'-deoxyadenosine + L-methionine + A + S-adenosyl-L-homocysteine + 2 H(+). Its function is as follows. Catalyzes the methylthiolation of N6-(dimethylallyl)adenosine (i(6)A), leading to the formation of 2-methylthio-N6-(dimethylallyl)adenosine (ms(2)i(6)A) at position 37 in tRNAs that read codons beginning with uridine. This Neorickettsia sennetsu (strain ATCC VR-367 / Miyayama) (Ehrlichia sennetsu) protein is tRNA-2-methylthio-N(6)-dimethylallyladenosine synthase.